Reading from the N-terminus, the 437-residue chain is MTVSSPFPRIPDPGVPVLVAFSGGLDSTVLLHCLASQPTQRIHGLEAIHIHHGLNENADAWTAHCAAFCTQHDIRLHIARVHVSHNSGQGLEAAARTARRAAFAHTLQHGHYLALAHHCDDQAETWLLRALRGSCDGLAAMRPLTPFAAGHLWRPLLTHSRAQLLDYAQQQHLDWIEDSSNADLRHDRNFLRIHVLPLLHQRWPQATAVLARNAALAAANADLLNAEDAVLLPDLLDPDGALDINALTAHPPARRARLLRAWCARAGAPPLPERGVNIIERELLPARHDSAACFTWSHTEIRRWRLRLYLHRPQPPWPPDWQPLWSGTAPLILPDGGQLHLESTDHETVPGFPHPLRVRARRGGERLILPGRTHSHPLKHLLQDVGIPPWRRASMPLLCDGEQILAVGDALLAAPLVTWLQAHRLKLRWQYHNNTCI.

Residue 22-27 participates in ATP binding; it reads SGGLDS.

It belongs to the tRNA(Ile)-lysidine synthase family.

The protein resides in the cytoplasm. It carries out the reaction cytidine(34) in tRNA(Ile2) + L-lysine + ATP = lysidine(34) in tRNA(Ile2) + AMP + diphosphate + H(+). Its function is as follows. Ligates lysine onto the cytidine present at position 34 of the AUA codon-specific tRNA(Ile) that contains the anticodon CAU, in an ATP-dependent manner. Cytidine is converted to lysidine, thus changing the amino acid specificity of the tRNA from methionine to isoleucine. This is tRNA(Ile)-lysidine synthase from Xylella fastidiosa (strain Temecula1 / ATCC 700964).